Consider the following 78-residue polypeptide: Acyl carrier protein (78 aa).

The region spanning 1–76 is the Carrier domain; the sequence is MALFEDIQAV…DVVKYIEDNK (76 aa). Residue Ser36 is modified to O-(pantetheine 4'-phosphoryl)serine.

The protein belongs to the acyl carrier protein (ACP) family. In terms of processing, 4'-phosphopantetheine is transferred from CoA to a specific serine of apo-ACP by AcpS. This modification is essential for activity because fatty acids are bound in thioester linkage to the sulfhydryl of the prosthetic group.

It is found in the cytoplasm. It functions in the pathway lipid metabolism; fatty acid biosynthesis. Its function is as follows. Carrier of the growing fatty acid chain in fatty acid biosynthesis. This Helicobacter acinonychis (strain Sheeba) protein is Acyl carrier protein.